Consider the following 467-residue polypeptide: ATP synthase subunit beta 1 (467 aa).

150–157 (GGAGVGKT) contributes to the ATP binding site.

This sequence belongs to the ATPase alpha/beta chains family. F-type ATPases have 2 components, CF(1) - the catalytic core - and CF(0) - the membrane proton channel. CF(1) has five subunits: alpha(3), beta(3), gamma(1), delta(1), epsilon(1). CF(0) has three main subunits: a(1), b(2) and c(9-12). The alpha and beta chains form an alternating ring which encloses part of the gamma chain. CF(1) is attached to CF(0) by a central stalk formed by the gamma and epsilon chains, while a peripheral stalk is formed by the delta and b chains.

Its subcellular location is the cell inner membrane. The enzyme catalyses ATP + H2O + 4 H(+)(in) = ADP + phosphate + 5 H(+)(out). Functionally, produces ATP from ADP in the presence of a proton gradient across the membrane. The catalytic sites are hosted primarily by the beta subunits. The polypeptide is ATP synthase subunit beta 1 (Vibrio campbellii (strain ATCC BAA-1116)).